The primary structure comprises 241 residues: Keratin-associated protein 5-5 (241 aa).

Tandem repeats lie at residues 35 to 38 (CCKP), 41 to 44 (CCKP), 47 to 50 (CCVP), 105 to 108 (CCKP), 115 to 118 (CCKP), 133 to 136 (CCKP), 143 to 146 (CCKP), 161 to 164 (CCKP), 171 to 174 (CCKP), 181 to 184 (CCKP), 191 to 194 (CCKP), 201 to 204 (CCKP), 211 to 214 (CCKP), 221 to 224 (CCKP), and 231 to 234 (CCAP). Positions 35 to 234 (CCKPVCCCKP…CCCQSSCCAP (200 aa)) are 15 X 4 AA repeats of C-C-X-P.

Belongs to the KRTAP type 5 family. Interacts with hair keratins.

Functionally, in the hair cortex, hair keratin intermediate filaments are embedded in an interfilamentous matrix, consisting of hair keratin-associated protein (KRTAP), which are essential for the formation of a rigid and resistant hair shaft through their extensive disulfide bond cross-linking with abundant cysteine residues of hair keratins. The matrix proteins include the high-sulfur and high-glycine-tyrosine keratins. The protein is Keratin-associated protein 5-5 of Mus musculus (Mouse).